We begin with the raw amino-acid sequence, 299 residues long: Nitrogenase iron protein (299 aa).

11–18 serves as a coordination point for ATP; that stretch reads GKGGIGKS. Position 99 (cysteine 99) interacts with [4Fe-4S] cluster. ADP-ribosylarginine; by dinitrogenase reductase ADP-ribosyltransferase is present on arginine 102. Cysteine 133 lines the [4Fe-4S] cluster pocket.

Belongs to the NifH/BchL/ChlL family. In terms of assembly, homodimer. It depends on [4Fe-4S] cluster as a cofactor. The reversible ADP-ribosylation of Arg-102 inactivates the nitrogenase reductase and regulates nitrogenase activity.

The catalysed reaction is N2 + 8 reduced [2Fe-2S]-[ferredoxin] + 16 ATP + 16 H2O = H2 + 8 oxidized [2Fe-2S]-[ferredoxin] + 2 NH4(+) + 16 ADP + 16 phosphate + 6 H(+). In terms of biological role, the key enzymatic reactions in nitrogen fixation are catalyzed by the nitrogenase complex, which has 2 components: the iron protein and the molybdenum-iron protein. The polypeptide is Nitrogenase iron protein (Rhodopseudomonas palustris (strain BisB5)).